Consider the following 68-residue polypeptide: Riparin-1.6 (68 aa).

A signal peptide spans 1-15 (MKIIVFLAVLMLVSA). Residues 16–41 (QVCLVSAAEMEHSSDNELSSRDLVKR) constitute a propeptide that is removed on maturation. Cysteines 47 and 53 form a disulfide. C53 is subject to Cysteine amide. A propeptide spanning residues 57 to 68 (DIESSEGANGGE) is cleaved from the precursor.

Expressed by the skin glands.

The protein localises to the secreted. In Crinia riparia (Streambank froglet), this protein is Riparin-1.6.